The chain runs to 559 residues: Formate--tetrahydrofolate ligase (559 aa).

68-75 is an ATP binding site; sequence TPAGEGKT.

This sequence belongs to the formate--tetrahydrofolate ligase family.

It carries out the reaction (6S)-5,6,7,8-tetrahydrofolate + formate + ATP = (6R)-10-formyltetrahydrofolate + ADP + phosphate. Its pathway is one-carbon metabolism; tetrahydrofolate interconversion. This Mesorhizobium japonicum (strain LMG 29417 / CECT 9101 / MAFF 303099) (Mesorhizobium loti (strain MAFF 303099)) protein is Formate--tetrahydrofolate ligase.